A 547-amino-acid chain; its full sequence is Serine/threonine-protein kinase RIO2 (547 aa).

The Protein kinase domain occupies 97-273 (VGNQMGVGKE…RDVKCIREFF (177 aa)). An ATP-binding site is contributed by lysine 123. The Proton acceptor role is filled by aspartate 228. A phosphoserine mark is found at serine 332, serine 337, serine 350, serine 362, serine 385, and serine 390. The segment at 352 to 385 (LEKEADPADESGGSWCCSSTDSKQIKDGGLPEES) is disordered. The Nuclear export signal signature appears at 399-408 (AVEEMERQVL). The interval 404–445 (ERQVLPHRSVTEFSEESRRTENDGQPGQRSPAGSEDCDDEPP) is disordered. 5 positions are modified to phosphoserine: serine 412, serine 417, serine 433, serine 437, and serine 543.

Belongs to the protein kinase superfamily. RIO-type Ser/Thr kinase family. As to quaternary structure, associated with late 40S pre-ribosomal particles. Interacts with PLK1 (via its N-terminus). Requires Mg(2+) as cofactor. Post-translationally, autophosphorylated (in vitro). Phosphorylation affects the timing of the metaphase-anaphase transition.

The protein resides in the cytoplasm. It catalyses the reaction L-seryl-[protein] + ATP = O-phospho-L-seryl-[protein] + ADP + H(+). The enzyme catalyses L-threonyl-[protein] + ATP = O-phospho-L-threonyl-[protein] + ADP + H(+). Serine/threonine-protein kinase involved in the final steps of cytoplasmic maturation of the 40S ribosomal subunit. Involved in export of the 40S pre-ribosome particles (pre-40S) from the nucleus to the cytoplasm. Its kinase activity is required for the release of NOB1, PNO1 and LTV1 from the late pre-40S and the processing of 18S-E pre-rRNA to the mature 18S rRNA. May regulate the timing of the metaphase-anaphase transition during mitotic progression, and its phosphorylation, may regulate this function. In Mus musculus (Mouse), this protein is Serine/threonine-protein kinase RIO2 (Riok2).